The primary structure comprises 287 residues: Large ribosomal subunit protein uL2 (287 aa).

Disordered stretches follow at residues 1–30 (MGIR…DQPE) and 211–287 (NRWK…GRQS). The span at 12–22 (GTRQKSVSDFS) shows a compositional bias: polar residues. Composition is skewed to basic residues over residues 211–220 (NRWKGRRPKV) and 258–287 (KTRK…GRQS).

Belongs to the universal ribosomal protein uL2 family. As to quaternary structure, part of the 50S ribosomal subunit. Forms a bridge to the 30S subunit in the 70S ribosome.

Its function is as follows. One of the primary rRNA binding proteins. Required for association of the 30S and 50S subunits to form the 70S ribosome, for tRNA binding and peptide bond formation. It has been suggested to have peptidyltransferase activity; this is somewhat controversial. Makes several contacts with the 16S rRNA in the 70S ribosome. In Cyanothece sp. (strain PCC 7425 / ATCC 29141), this protein is Large ribosomal subunit protein uL2.